Consider the following 247-residue polypeptide: Ubiquinone biosynthesis O-methyltransferase (247 aa).

S-adenosyl-L-methionine-binding residues include Arg39, Gly70, Asp91, and Met134.

It belongs to the methyltransferase superfamily. UbiG/COQ3 family.

The catalysed reaction is a 3-demethylubiquinol + S-adenosyl-L-methionine = a ubiquinol + S-adenosyl-L-homocysteine + H(+). It carries out the reaction a 3-(all-trans-polyprenyl)benzene-1,2-diol + S-adenosyl-L-methionine = a 2-methoxy-6-(all-trans-polyprenyl)phenol + S-adenosyl-L-homocysteine + H(+). The protein operates within cofactor biosynthesis; ubiquinone biosynthesis. In terms of biological role, O-methyltransferase that catalyzes the 2 O-methylation steps in the ubiquinone biosynthetic pathway. This Cereibacter sphaeroides (strain ATCC 17023 / DSM 158 / JCM 6121 / CCUG 31486 / LMG 2827 / NBRC 12203 / NCIMB 8253 / ATH 2.4.1.) (Rhodobacter sphaeroides) protein is Ubiquinone biosynthesis O-methyltransferase.